The sequence spans 137 residues: Putative pre-16S rRNA nuclease (137 aa).

The protein belongs to the YqgF nuclease family.

The protein localises to the cytoplasm. Functionally, could be a nuclease involved in processing of the 5'-end of pre-16S rRNA. This is Putative pre-16S rRNA nuclease from Bacillus cereus (strain B4264).